The primary structure comprises 237 residues: tRNA (guanine-N(1)-)-methyltransferase (237 aa).

S-adenosyl-L-methionine is bound by residues Gly115 and 134-139; that span reads LGDFVL.

Belongs to the RNA methyltransferase TrmD family. As to quaternary structure, homodimer.

The protein resides in the cytoplasm. The catalysed reaction is guanosine(37) in tRNA + S-adenosyl-L-methionine = N(1)-methylguanosine(37) in tRNA + S-adenosyl-L-homocysteine + H(+). Its function is as follows. Specifically methylates guanosine-37 in various tRNAs. This chain is tRNA (guanine-N(1)-)-methyltransferase, found in Synechococcus sp. (strain RCC307).